The following is a 771-amino-acid chain: 5-methyltetrahydropteroyltriglutamate--homocysteine methyltransferase (771 aa).

5-methyltetrahydropteroyltri-L-glutamate is bound by residues 13–16 (RELK) and K128. Residues 451–453 (IGS) and E504 contribute to the L-homocysteine site. L-methionine-binding positions include 451–453 (IGS) and E504. 5-methyltetrahydropteroyltri-L-glutamate is bound by residues 535 to 536 (RC) and W581. Position 619 (D619) interacts with L-homocysteine. D619 contributes to the L-methionine binding site. Residue E625 coordinates 5-methyltetrahydropteroyltri-L-glutamate. H661, C663, and E685 together coordinate Zn(2+). H714 acts as the Proton donor in catalysis. A Zn(2+)-binding site is contributed by C746.

This sequence belongs to the vitamin-B12 independent methionine synthase family. Zn(2+) serves as cofactor.

The enzyme catalyses 5-methyltetrahydropteroyltri-L-glutamate + L-homocysteine = tetrahydropteroyltri-L-glutamate + L-methionine. It participates in amino-acid biosynthesis; L-methionine biosynthesis via de novo pathway; L-methionine from L-homocysteine (MetE route): step 1/1. In terms of biological role, catalyzes the transfer of a methyl group from 5-methyltetrahydrofolate to homocysteine resulting in methionine formation. This Nitrobacter winogradskyi (strain ATCC 25391 / DSM 10237 / CIP 104748 / NCIMB 11846 / Nb-255) protein is 5-methyltetrahydropteroyltriglutamate--homocysteine methyltransferase.